Consider the following 441-residue polypeptide: Chromosome partition protein MukF (441 aa).

Residues 208 to 236 (LTETSSTLRELQDTLEAAGDKLQTSLLSI) form a leucine-zipper region.

The protein belongs to the MukF family. As to quaternary structure, interacts, and probably forms a ternary complex, with MukE and MukB via its C-terminal region. The complex formation is stimulated by calcium or magnesium. It is required for an interaction between MukE and MukB.

It is found in the cytoplasm. The protein resides in the nucleoid. Its function is as follows. Involved in chromosome condensation, segregation and cell cycle progression. May participate in facilitating chromosome segregation by condensation DNA from both sides of a centrally located replisome during cell division. Not required for mini-F plasmid partitioning. Probably acts via its interaction with MukB and MukE. Overexpression results in anucleate cells. It has a calcium binding activity. This is Chromosome partition protein MukF from Pectobacterium atrosepticum (strain SCRI 1043 / ATCC BAA-672) (Erwinia carotovora subsp. atroseptica).